We begin with the raw amino-acid sequence, 2035 residues long: Host cell factor 1 (2035 aa).

An N-acetylalanine modification is found at alanine 2. Phosphoserine is present on serine 6. Kelch repeat units follow at residues 44 to 89 (LIVV…GFVC), 93 to 140 (RLLV…RLGH), 148 to 194 (KCYL…ITYG), 217 to 265 (KLVI…TIGN), and 266 to 313 (KMYV…LMDT). Glycyl lysine isopeptide (Lys-Gly) (interchain with G-Cter in ubiquitin) cross-links involve residues lysine 105, lysine 163, and lysine 244. Residue lysine 282 forms a Glycyl lysine isopeptide (Lys-Gly) (interchain with G-Cter in SUMO2) linkage. At lysine 288 the chain carries N6-acetyllysine. A Glycyl lysine isopeptide (Lys-Gly) (interchain with G-Cter in ubiquitin) cross-link involves residue lysine 363. The Fibronectin type-III 1 domain maps to 366 to 466 (PPARVQLVRA…TTTTIQVLPT (101 aa)). Residues 407–434 (ATATSPTPNPVPSVPANPPKSPAPAAAA) form a disordered region. Serine 411 is subject to Phosphoserine. Residues 413 to 428 (TPNPVPSVPANPPKSP) are compositionally biased toward pro residues. Residues 500–550 (LVTMRPASQAGKAPVTVTSLPAGVRMVVPTQSAQGTVIGSSPQMSGMAALA) are required for interaction with OGT. Residues arginine 504 and arginine 524 each carry the omega-N-methylarginine modification. A phosphoserine mark is found at serine 598, serine 666, and serine 669. The segment at 610 to 722 (LKTAAAQVGT…KGPLPAGTIL (113 aa)) is interaction with SIN3A. Residues 750 to 902 (ILGISSVSPS…SLAGAGGHST (153 aa)) form an interaction with ZBTB17 region. Lysine 813 carries the N6-acetyllysine modification. The tract at residues 813–912 (KIITAVPKIA…SASLATPITT (100 aa)) is interaction with GABP2. 3 HCF repeat repeats span residues 1010-1035 (TLVC…TVVA), 1072-1097 (VRVC…ATSN), and 1101-1126 (QHGC…AMSS). The stretch at 1158–1183 (AAQGSKSQCQTRQTSATSTTMTVMAT) is one HCF repeat 4; degenerate repeat. Serine 1205 bears the Phosphoserine mark. The residue at position 1219 (arginine 1219) is an Omega-N-methylarginine. Serine 1224 carries the phosphoserine modification. HCF repeat repeat units lie at residues 1286 to 1311 (TQVC…SNAG) and 1314 to 1339 (QRVC…ATSN). 3 disordered regions span residues 1292 to 1371 (PPCE…TMSV), 1435 to 1470 (TVTS…TSSS), and 1487 to 1515 (VTQS…QQLP). Composition is skewed to low complexity over residues 1299 to 1312 (TGTT…NAGS), 1329 to 1339 (TTHTATTATSN), and 1362 to 1371 (TTSTGTTMSV). The HCF repeat 7; degenerate repeat unit spans residues 1349-1374 (QQPPAGRPCETHQTTSTGTTMSVSVG). Residues 1414–1439 (QRVCSNPPCETHETGTTHTATTVTSN) form an HCF repeat 8 repeat. Threonine 1491 bears the Phosphothreonine mark. Pro residues predominate over residues 1493–1502 (VPGPSVPPPE). A phosphoserine mark is found at serine 1497, serine 1507, and serine 1771. Fibronectin type-III domains lie at 1797-1888 (LPPP…TCLP) and 1890-2006 (FPGA…TSKD). Residues lysine 1807 and lysine 1808 each participate in a glycyl lysine isopeptide (Lys-Gly) (interchain with G-Cter in ubiquitin) cross-link. Serine 1838 is modified (phosphoserine). The interval 1994-2035 (ATQVRWLQETSKDSSGTKPANKRPMSSPEMKSAPKKSKADGQ) is disordered. The residue at position 2005 (lysine 2005) is an N6-acetyllysine. Lysine 2024 is covalently cross-linked (Glycyl lysine isopeptide (Lys-Gly) (interchain with G-Cter in SUMO2)).

As to quaternary structure, composed predominantly of six polypeptides ranging from 110 to 150 kDa and a minor 300 kDa polypeptide. The majority of N- and C-terminal cleavage products remain tightly, albeit non-covalently, associated. Interacts with POU2F1, CREB3, ZBTB17, EGR2, E2F4, CREBZF, SP1, GABP2, Sin3 HDAC complex (SIN3A, HDAC1, HDAC2, SUDS3), SAP30, SIN3B and FHL2. Component of a MLL1 complex, composed of at least the core components KMT2A/MLL1, ASH2L, HCFC1, WDR5 and RBBP5, as well as the facultative components BACC1, CHD8, DPY30, E2F6, HCFC2, HSP70, INO80C, KANSL1, LAS1L, MAX, MCRS1, MEN1, MGA, KAT8, PELP1, PHF20, PRP31, RING2, RUVBL1, RUVBL2, SENP3, TAF1, TAF4, TAF6, TAF7, TAF9 and TEX10. Component of a THAP1/THAP3-HCFC1-OGT complex that is required for the regulation of the transcriptional activity of RRM1. Interacts directly with THAP3 (via its HBM). Interacts (via the Kelch-repeat domain) with THAP1 (via the HBM); the interaction recruits HCHC1 to the RRM1. Interacts with THAP7 and THAP11 (via the HMB). Interacts directly with OGT; the interaction, which requires the HCFC1 cleavage site domain, glycosylates and promotes the proteolytic processing of HCFC1, retains OGT in the nucleus and impacts the expression of herpes simplex virus immediate early viral genes. Component of the SET1 complex, at least composed of the catalytic subunit (SETD1A or SETD1B), WDR5, WDR82, RBBP5, ASH2L, CXXC1, HCFC1 and DPY30. Component of the NSL complex at least composed of MOF/KAT8, KANSL1, KANSL2, KANSL3, MCRS1, PHF20, OGT1/OGT, WDR5 and HCFC1. Component of a complex at least composed of ZNF335, HCFC1, CCAR2, EMSY, MKI67, RBBP5, ASH2L and WDR5; the complex is formed as a result of interactions between components of a nuclear receptor-mediated transcription complex and a histone methylation complex. Within the complex interacts with ZNF335. Interacts with TET2 and TET3. Interacts with HCFC1R1. Interacts with THAP11. Interacts (via Kelch domain) with KMT2E/MLL5 isoform 3 (via HBM motif). Interacts with E2F1. Accessory scaffold component of the polycomb repressive deubiquitinase (PR-DUB) complex, at least composed of BAP1, one of ASXL1, ASXL2 or (probably) ASXL3 and one of MBD5 or MBD6; the PR-DUB core associates with a number of accessory proteins, including FOXK1, FOXK2, KDM1B, HCFC1, YY1 and OGT. Interacts with YY1 (via Gly-rich region); the interaction is direct. Interacts with BAP1 (via HBM-like motif). In terms of assembly, (Microbial infection) Associates with the VP16-induced complex; binding to HCFC1 activates the viral transcriptional activator VP16 for association with POU2F1, to form a multiprotein-DNA complex responsible for activating transcription of the viral immediate early genes. Interacts with the viral transactivator protein VP16. Proteolytically cleaved at one or several PPCE--THET sites within the HCF repeats. Further cleavage of the primary N- and C-terminal chains results in a 'trimming' and accumulation of the smaller chains. Cleavage is promoted by O-glycosylation. In terms of processing, O-glycosylated. GlcNAcylation by OGT promotes proteolytic processing. Post-translationally, ubiquitinated. Lys-1807 and Lys-1808 are ubiquitinated both via 'Lys-48'- and 'Lys-63'-linked polyubiquitin chains. BAP1 mediated deubiquitination of 'Lys-48'-linked polyubiquitin chains; deubiquitination by BAP1 does not seem to stabilize the protein. In terms of tissue distribution, highly expressed in fetal tissues and the adult kidney. Present in all tissues tested.

It localises to the cytoplasm. It is found in the nucleus. Transcriptional coregulator. Serves as a scaffold protein, bridging interactions between transcription factors, including THAP11 and ZNF143, and transcriptional coregulators. Involved in control of the cell cycle. Also antagonizes transactivation by ZBTB17 and GABP2; represses ZBTB17 activation of the p15(INK4b) promoter and inhibits its ability to recruit p300. Coactivator for EGR2 and GABP2. Tethers the chromatin modifying Set1/Ash2 histone H3 'Lys-4' methyltransferase (H3K4me) and Sin3 histone deacetylase (HDAC) complexes (involved in the activation and repression of transcription, respectively) together. Component of a THAP1/THAP3-HCFC1-OGT complex that is required for the regulation of the transcriptional activity of RRM1. As part of the NSL complex it may be involved in acetylation of nucleosomal histone H4 on several lysine residues. Recruits KMT2E/MLL5 to E2F1 responsive promoters promoting transcriptional activation and thereby facilitates G1 to S phase transition. Modulates expression of homeobox protein PDX1, perhaps acting in concert with transcription factor E2F1, thereby regulating pancreatic beta-cell growth and glucose-stimulated insulin secretion. May negatively modulate transcriptional activity of FOXO3. Functionally, (Microbial infection) In case of human herpes simplex virus (HSV) infection, HCFC1 forms a multiprotein-DNA complex with the viral transactivator protein VP16 and POU2F1 thereby enabling the transcription of the viral immediate early genes. In Homo sapiens (Human), this protein is Host cell factor 1.